Reading from the N-terminus, the 411-residue chain is Squalene synthase (411 aa).

The NADP(+) site is built by arginine 49 and arginine 74. Residues aspartate 77, glutamate 80, and aspartate 81 each contribute to the Mg(2+) site. Residues arginine 212, lysine 312, and arginine 314 each contribute to the NADP(+) site. A helical membrane pass occupies residues serine 388 to glycine 408.

It belongs to the phytoene/squalene synthase family. The cofactor is Mg(2+).

It localises to the membrane. The enzyme catalyses 2 (2E,6E)-farnesyl diphosphate + NADH + H(+) = squalene + 2 diphosphate + NAD(+). The catalysed reaction is 2 (2E,6E)-farnesyl diphosphate + NADPH + H(+) = squalene + 2 diphosphate + NADP(+). Its function is as follows. Converts farnesyl diphosphate (FPP) into squalene, a precursor for sterol biosynthesis in eukaryotes. The polypeptide is Squalene synthase (Solanum lycopersicum (Tomato)).